Here is a 194-residue protein sequence, read N- to C-terminus: Mediator of RNA polymerase II transcription subunit 8 (194 aa).

It belongs to the Mediator complex subunit 8 family. As to quaternary structure, component of the Mediator complex.

It localises to the nucleus. In terms of biological role, component of the Mediator complex, a coactivator involved in the regulated transcription of nearly all RNA polymerase II-dependent genes. Mediator functions as a bridge to convey information from gene-specific regulatory proteins to the basal RNA polymerase II transcription machinery. Mediator is recruited to promoters by direct interactions with regulatory proteins and serves as a scaffold for the assembly of a functional preinitiation complex with RNA polymerase II and the general transcription factors. The protein is Mediator of RNA polymerase II transcription subunit 8 (MED8) of Yarrowia lipolytica (strain CLIB 122 / E 150) (Yeast).